Here is a 355-residue protein sequence, read N- to C-terminus: Guanine nucleotide-binding protein G(z) subunit alpha (355 aa).

Residues 1-14 (MGCRQSSEEKEAAR) are compositionally biased toward basic and acidic residues. The disordered stretch occupies residues 1–26 (MGCRQSSEEKEAARRSRRIDRHLRSE). Residue Gly-2 is the site of N-myristoyl glycine attachment. The S-palmitoyl cysteine moiety is linked to residue Cys-3. A G-alpha domain is found at 32-355 (REIKLLLLGT…QNNLKYIGLC (324 aa)). The segment at 35–48 (KLLLLGTSNSGKST) is G1 motif. Residues 40–47 (GTSNSGKS), 176–182 (LRSRDMT), 201–205 (DVGGQ), 270–273 (NKKD), and Ala-327 contribute to the GTP site. Ser-47 serves as a coordination point for Mg(2+). The segment at 174 to 182 (DILRSRDMT) is G2 motif. The residue at position 179 (Arg-179) is an ADP-ribosylarginine; by cholera toxin. Thr-182 is a Mg(2+) binding site. The tract at residues 197–206 (FKMVDVGGQR) is G3 motif. The tract at residues 266–273 (ILFLNKKD) is G4 motif. Residues 325–330 (TCATDT) form a G5 motif region.

It belongs to the G-alpha family. G(i/o/t/z) subfamily. As to quaternary structure, G-proteins are composed of 3 units; alpha, beta and gamma. The alpha chain contains the guanine nucleotide binding site. Interacts with ADGRB2.

The protein resides in the membrane. Guanine nucleotide-binding proteins (G proteins) are involved as modulators or transducers in various transmembrane signaling systems. In Homo sapiens (Human), this protein is Guanine nucleotide-binding protein G(z) subunit alpha (GNAZ).